The following is a 398-amino-acid chain: Membrane-spanning 4-domains subfamily A member 18 (398 aa).

Transmembrane regions (helical) follow at residues Leu-156–Leu-176, Tyr-178–Val-198, Ser-218–Thr-238, and Ala-251–Ser-271. The segment at Thr-316 to Pro-346 is disordered. Positions Val-319 to His-331 are enriched in polar residues. Residues Pro-332 to Pro-346 are compositionally biased toward low complexity.

It belongs to the MS4A family.

It localises to the membrane. The polypeptide is Membrane-spanning 4-domains subfamily A member 18 (MS4A18) (Homo sapiens (Human)).